Here is a 498-residue protein sequence, read N- to C-terminus: Glutathione synthetase large chain (498 aa).

Arg-128 is a binding site for substrate. Glu-146 lines the ATP pocket. Residues Glu-146 and Asn-148 each coordinate Mg(2+). Substrate contacts are provided by residues 150-153, 233-235, Gln-239, and 291-294; these read ISVS, ERN, and RVGY. Lys-330 lines the ATP pocket. Residue Ser-356 is modified to Phosphoserine. ATP is bound by residues 387-396, Tyr-398, 420-423, and Glu-446; these read KPQREGGGNN and MRYI. Residue Glu-391 coordinates Mg(2+). A substrate-binding site is contributed by Arg-473. ATP-binding residues include Lys-475 and Glu-481. Residue 484 to 485 coordinates substrate; the sequence is VA.

It belongs to the eukaryotic GSH synthase family. As to quaternary structure, heterodimer composed of a large and a small chain. Mg(2+) serves as cofactor.

It catalyses the reaction gamma-L-glutamyl-L-cysteine + glycine + ATP = glutathione + ADP + phosphate + H(+). It participates in sulfur metabolism; glutathione biosynthesis; glutathione from L-cysteine and L-glutamate: step 2/2. The chain is Glutathione synthetase large chain (gsa1) from Schizosaccharomyces pombe (strain 972 / ATCC 24843) (Fission yeast).